We begin with the raw amino-acid sequence, 802 residues long: Ent-copalyl diphosphate synthase, chloroplastic (802 aa).

A chloroplast-targeting transit peptide spans 1–60; sequence MSLQYHVLNSIPSTTFLSSTKTTISSSFLTISGSPLNVARDKSRSGSIHCSKLRTQEYIN. Position 245 (K245) interacts with substrate. The Mg(2+) site is built by D377 and D379. The DXDD motif signature appears at 377–380; the sequence is DIDD. A substrate-binding site is contributed by K463.

The protein belongs to the terpene synthase family. Tpsc subfamily. Mg(2+) is required as a cofactor. The N-terminus is blocked. Expressed in roots, leaves, flowers and also in siliques.

It localises to the plastid. It is found in the chloroplast. It catalyses the reaction (2E,6E,10E)-geranylgeranyl diphosphate = ent-copalyl diphosphate. Its pathway is plant hormone biosynthesis; gibberellin biosynthesis. Its activity is regulated as follows. Inhibited by high concentrations of magnesium. Catalyzes the conversion of geranylgeranyl diphosphate to the gibberellin precursor ent-copalyl diphosphate. This Arabidopsis thaliana (Mouse-ear cress) protein is Ent-copalyl diphosphate synthase, chloroplastic (GA1).